The chain runs to 535 residues: Ribonuclease Y (535 aa).

The chain crosses the membrane as a helical span at residues Ile4–Ile24. Positions Glu118–Ile141 are disordered. A KH domain is found at Thr225–Leu285. The HD domain occupies Val351–Ala444.

This sequence belongs to the RNase Y family.

It localises to the cell membrane. In terms of biological role, endoribonuclease that initiates mRNA decay. The sequence is that of Ribonuclease Y from Streptococcus pyogenes serotype M1.